A 118-amino-acid chain; its full sequence is Large ribosomal subunit protein bL19 (118 aa).

Belongs to the bacterial ribosomal protein bL19 family.

Its function is as follows. This protein is located at the 30S-50S ribosomal subunit interface and may play a role in the structure and function of the aminoacyl-tRNA binding site. The chain is Large ribosomal subunit protein bL19 from Frankia alni (strain DSM 45986 / CECT 9034 / ACN14a).